Consider the following 187-residue polypeptide: Elongation factor P (187 aa).

It belongs to the elongation factor P family.

It is found in the cytoplasm. It participates in protein biosynthesis; polypeptide chain elongation. In terms of biological role, involved in peptide bond synthesis. Stimulates efficient translation and peptide-bond synthesis on native or reconstituted 70S ribosomes in vitro. Probably functions indirectly by altering the affinity of the ribosome for aminoacyl-tRNA, thus increasing their reactivity as acceptors for peptidyl transferase. The chain is Elongation factor P from Synechococcus sp. (strain CC9311).